Here is a 229-residue protein sequence, read N- to C-terminus: C-&gt;U-editing enzyme APOBEC-1 (229 aa).

One can recognise a CMP/dCMP-type deaminase domain in the interval 10–134; the sequence is VDPTLRRRIE…QRNRQGLRDL (125 aa). Zn(2+) is bound at residue His-61. Glu-63 functions as the Proton donor in the catalytic mechanism. Zn(2+) is bound by residues Cys-93 and Cys-96.

The protein belongs to the cytidine and deoxycytidylate deaminase family. In terms of assembly, homodimer. Interacts with A1CF; form an mRNA editing complex. Interacts with RBM47; form an mRNA editing complex. Found in a complex with CELF2/CUGBP2 and A1CF. Interacts with HNRPAB. Interacts with SYNCRIP. The cofactor is Zn(2+).

The protein localises to the cytoplasm. It localises to the nucleus. The catalysed reaction is a cytidine in mRNA + H2O + H(+) = a uridine in mRNA + NH4(+). The enzyme catalyses cytidine(6666) in apoB mRNA + H2O + H(+) = uridine(6666) in apoB mRNA + NH4(+). Functionally, cytidine deaminase catalyzing the cytidine to uridine postranscriptional editing of a variety of mRNAs. Form complexes with cofactors that confer differential editing activity and selectivity. Responsible for the postranscriptional editing of a CAA codon for Gln to a UAA codon for stop in the apolipoprotein B mRNA. Also involved in CGA (Arg) to UGA (Stop) editing in the NF1 mRNA. May also play a role in the epigenetic regulation of gene expression by participating in DNA demethylation. The protein is C-&gt;U-editing enzyme APOBEC-1 of Mesocricetus auratus (Golden hamster).